The primary structure comprises 544 residues: Methionine--tRNA ligase (544 aa).

The 'HIGH' region motif lies at 10–20 (PYANGSLHLGH). Residues C141, C144, C153, and C156 each contribute to the Zn(2+) site. The 'KMSKS' region signature appears at 329-333 (KLSTS). Residue T332 coordinates ATP.

The protein belongs to the class-I aminoacyl-tRNA synthetase family. MetG type 1 subfamily. In terms of assembly, monomer. The cofactor is Zn(2+).

Its subcellular location is the cytoplasm. The enzyme catalyses tRNA(Met) + L-methionine + ATP = L-methionyl-tRNA(Met) + AMP + diphosphate. In terms of biological role, is required not only for elongation of protein synthesis but also for the initiation of all mRNA translation through initiator tRNA(fMet) aminoacylation. The polypeptide is Methionine--tRNA ligase (Bacillus cereus (strain G9842)).